Here is a 113-residue protein sequence, read N- to C-terminus: FK506-binding protein 1B (113 aa).

Residues Gly19–Gln113 form the PPIase FKBP-type domain.

This sequence belongs to the FKBP-type PPIase family. FKBP1 subfamily.

It localises to the cytoplasm. The catalysed reaction is [protein]-peptidylproline (omega=180) = [protein]-peptidylproline (omega=0). With respect to regulation, inhibited by both FK506 and rapamycin. Functionally, PPIases accelerate the folding of proteins. It catalyzes the cis-trans isomerization of proline imidic peptide bonds in oligopeptides. This is FK506-binding protein 1B (fkr-3) from Neurospora crassa (strain ATCC 24698 / 74-OR23-1A / CBS 708.71 / DSM 1257 / FGSC 987).